The sequence spans 492 residues: Transcription factor IIIB 60 kDa subunit (492 aa).

The TFIIB-type zinc-finger motif lies at 1–30 (MGCPNCGSTTFESDTASGNTYCTQCGVVVE). Cysteine 3, cysteine 6, cysteine 22, and cysteine 25 together coordinate Zn(2+). The disordered stretch occupies residues 440–468 (QPRKRRRYRPRDSTSDGIADTAAESAKEM).

The protein belongs to the TFIIB family. As to quaternary structure, TFIIIB comprises the TATA-binding protein (TBP), the B-related factor (BRF) and a third subunit (Potential). Interacts with maf1.

The protein localises to the nucleus. Functionally, general activator of RNA polymerase III transcription. This Schizosaccharomyces pombe (strain 972 / ATCC 24843) (Fission yeast) protein is Transcription factor IIIB 60 kDa subunit (brf1).